We begin with the raw amino-acid sequence, 245 residues long: 1-(5-phosphoribosyl)-5-[(5-phosphoribosylamino)methylideneamino] imidazole-4-carboxamide isomerase (245 aa).

Asp-7 functions as the Proton acceptor in the catalytic mechanism. Asp-129 serves as the catalytic Proton donor.

It belongs to the HisA/HisF family.

It localises to the cytoplasm. It catalyses the reaction 1-(5-phospho-beta-D-ribosyl)-5-[(5-phospho-beta-D-ribosylamino)methylideneamino]imidazole-4-carboxamide = 5-[(5-phospho-1-deoxy-D-ribulos-1-ylimino)methylamino]-1-(5-phospho-beta-D-ribosyl)imidazole-4-carboxamide. It functions in the pathway amino-acid biosynthesis; L-histidine biosynthesis; L-histidine from 5-phospho-alpha-D-ribose 1-diphosphate: step 4/9. This is 1-(5-phosphoribosyl)-5-[(5-phosphoribosylamino)methylideneamino] imidazole-4-carboxamide isomerase from Psychromonas ingrahamii (strain DSM 17664 / CCUG 51855 / 37).